The following is an 86-amino-acid chain: Small ribosomal subunit protein bS16 (86 aa).

This sequence belongs to the bacterial ribosomal protein bS16 family.

The protein is Small ribosomal subunit protein bS16 of Borreliella burgdorferi (strain ATCC 35210 / DSM 4680 / CIP 102532 / B31) (Borrelia burgdorferi).